The sequence spans 624 residues: Probable potassium transport system protein Kup (624 aa).

Helical transmembrane passes span 16–36 (ALLTLGALGVVFGDIGTSPLY), 59–79 (IISMVLWTITLIVTVKYVMLV), 106–126 (FVAVAGMLGAALFYGDVVITP), 147–167 (FILPVSLAVLIAIFAIQPLGT), 174–194 (FGPIMLLWFVTLAGLGIPQII), 211–231 (LIVAEPFQAFVLLGAVVLTVT), 252–272 (WFCVVMPALILTYLGQGALVI), 292–312 (IPLVILATIATVIASQAVISG), 342–362 (IYMPLVNGLLFVSVMVVVLVF), 371–391 (AYGLAVTGTLVLVSVLYLIYV), 394–414 (TWWKTALFIVLIGIPEVLLFA), and 418–438 (TKIHDGGWLPLLIAAVLIVVM).

Belongs to the HAK/KUP transporter (TC 2.A.72) family.

The protein localises to the cell membrane. The enzyme catalyses K(+)(in) + H(+)(in) = K(+)(out) + H(+)(out). Transport of potassium into the cell. Likely operates as a K(+):H(+) symporter. The polypeptide is Probable potassium transport system protein Kup (Corynebacterium glutamicum (strain ATCC 13032 / DSM 20300 / JCM 1318 / BCRC 11384 / CCUG 27702 / LMG 3730 / NBRC 12168 / NCIMB 10025 / NRRL B-2784 / 534)).